The primary structure comprises 649 residues: Echinoderm microtubule-associated protein-like 2 (649 aa).

The segment at 10–649 (KEVIFSMEEG…DTSVLQWRVA (640 aa)) is tandem atypical propeller in EMLs. WD repeat units follow at residues 56-93 (KLDW…LYSV), 97-144 (RQRH…VWDS), 151-192 (HVLG…VWDW), 195-234 (ESKV…FWSL), 241-280 (KRQG…VWGK), 285-323 (ITQE…LWGS), 369-406 (FSLL…LWSS), 410-447 (QPVW…LLDT), 452-489 (LVAI…VYTV), 495-535 (KVSR…YWDA), 564-602 (FGIW…LFSY), and 609-648 (ALSH…QWRV).

This sequence belongs to the WD repeat EMAP family. Interacts with GRID2 and may also interact with GRID1. Interacts with EML3. Binds unpolymerized tubulins via its WD repeat region. Widely expressed in both brain and peripheral tissues, including brainstem and enrichment in the postsynaptic density, PSD.

It localises to the cytoplasm. It is found in the cytoskeleton. The protein localises to the spindle. Its function is as follows. Tubulin binding protein that inhibits microtubule nucleation and growth, resulting in shorter microtubules. The polypeptide is Echinoderm microtubule-associated protein-like 2 (Eml2) (Rattus norvegicus (Rat)).